The chain runs to 202 residues: ATP-dependent Clp protease proteolytic subunit (202 aa).

Ser-101 serves as the catalytic Nucleophile. Residue His-126 is part of the active site.

Belongs to the peptidase S14 family. As to quaternary structure, component of the chloroplastic Clp protease core complex.

Its subcellular location is the plastid. It is found in the chloroplast stroma. The catalysed reaction is Hydrolysis of proteins to small peptides in the presence of ATP and magnesium. alpha-casein is the usual test substrate. In the absence of ATP, only oligopeptides shorter than five residues are hydrolyzed (such as succinyl-Leu-Tyr-|-NHMec, and Leu-Tyr-Leu-|-Tyr-Trp, in which cleavage of the -Tyr-|-Leu- and -Tyr-|-Trp bonds also occurs).. Functionally, cleaves peptides in various proteins in a process that requires ATP hydrolysis. Has a chymotrypsin-like activity. Plays a major role in the degradation of misfolded proteins. The sequence is that of ATP-dependent Clp protease proteolytic subunit from Acorus gramineus (Dwarf sweet flag).